Consider the following 434-residue polypeptide: Probable tRNA pseudouridine synthase D (434 aa).

Asp-93 (nucleophile) is an active-site residue. In terms of domain architecture, TRUD spans 169 to 396 (GTPNYFGQQR…SAGSRRAILL (228 aa)).

Belongs to the pseudouridine synthase TruD family.

The enzyme catalyses uridine(13) in tRNA = pseudouridine(13) in tRNA. In terms of biological role, could be responsible for synthesis of pseudouridine from uracil-13 in transfer RNAs. The chain is Probable tRNA pseudouridine synthase D from Halobacterium salinarum (strain ATCC 29341 / DSM 671 / R1).